Here is a 408-residue protein sequence, read N- to C-terminus: Putative mannan endo-1,4-beta-mannosidase P (408 aa).

The N-terminal stretch at 1–23 is a signal peptide; sequence MKCLCFIVLLAIVIAQSYVGVEA. Asn-73 is a glycosylation site (N-linked (GlcNAc...) asparagine). Residues Trp-85 and Asn-201 each contribute to the substrate site. The active-site Proton donor is Glu-202. Glu-322 serves as the catalytic Nucleophile. Trp-364 is a binding site for substrate.

It belongs to the glycosyl hydrolase 5 (cellulase A) family.

The protein resides in the secreted. The enzyme catalyses Random hydrolysis of (1-&gt;4)-beta-D-mannosidic linkages in mannans, galactomannans and glucomannans.. The chain is Putative mannan endo-1,4-beta-mannosidase P (MANP) from Arabidopsis thaliana (Mouse-ear cress).